A 382-amino-acid chain; its full sequence is Na(+)/H(+) antiporter NhaA 1 (382 aa).

The next 11 helical transmembrane spans lie at 10–30 (EFSI…NISP), 45–65 (FSFH…IAAA), 87–107 (LLAT…LNAL), 116–136 (GWGI…SLVF), 145–165 (FLLL…ALFY), 170–190 (LPAA…AALL), 211–231 (AGLF…VPFL), 252–272 (LASF…LFGL), 275–295 (AGVT…SLVI), 326–346 (LVGL…GEAF), and 353–373 (GAAK…LAAG).

This sequence belongs to the NhaA Na(+)/H(+) (TC 2.A.33) antiporter family.

The protein resides in the cell inner membrane. It catalyses the reaction Na(+)(in) + 2 H(+)(out) = Na(+)(out) + 2 H(+)(in). Its function is as follows. Na(+)/H(+) antiporter that extrudes sodium in exchange for external protons. This is Na(+)/H(+) antiporter NhaA 1 from Pelobacter propionicus (strain DSM 2379 / NBRC 103807 / OttBd1).